We begin with the raw amino-acid sequence, 306 residues long: Curved DNA-binding protein (306 aa).

Residues 5 to 69 (DYYAIMGVKP…QRRAEYDQMW (65 aa)) form the J domain.

The protein localises to the cytoplasm. Its subcellular location is the nucleoid. Functionally, DNA-binding protein that preferentially recognizes a curved DNA sequence. It is probably a functional analog of DnaJ; displays overlapping activities with DnaJ, but functions under different conditions, probably acting as a molecular chaperone in an adaptive response to environmental stresses other than heat shock. Lacks autonomous chaperone activity; binds native substrates and targets them for recognition by DnaK. Its activity is inhibited by the binding of CbpM. This chain is Curved DNA-binding protein, found in Shigella boydii serotype 18 (strain CDC 3083-94 / BS512).